The sequence spans 501 residues: Probable cytochrome P450 6t3 (501 aa).

Cys444 is a binding site for heme.

The protein belongs to the cytochrome P450 family. It depends on heme as a cofactor.

It is found in the endoplasmic reticulum membrane. The protein localises to the microsome membrane. Functionally, may be involved in the metabolism of insect hormones and in the breakdown of synthetic insecticides. The polypeptide is Probable cytochrome P450 6t3 (Cyp6t3) (Drosophila melanogaster (Fruit fly)).